Reading from the N-terminus, the 220-residue chain is Transcriptional regulatory protein LnrK (220 aa).

Residues 3–119 form the Response regulatory domain; that stretch reads KIIITDDQDI…TIVKAVMTVH (117 aa). A 4-aspartylphosphate modification is found at D54. Residues 151–216 enclose the HTH luxR-type domain; sequence KPNELLDLTE…QAAIYSVRYG (66 aa). A DNA-binding region (H-T-H motif) is located at residues 175–194; the sequence is NKEIAEKLYITEGTVKNHVS.

Phosphorylated by LnrJ.

It is found in the cytoplasm. Required for resistance to linearmycins, a family of antibiotic-specialized metabolites produced by some streptomycetes. Member of the two-component regulatory system LnrJ/LnrK, which induces expression of the LnrLMN ABC transporter in response to linearmycins and other polyenes. Probably binds to the promoter region of the lnrLMN operon and directly regulates its expression. May also promote biofilm formation. The polypeptide is Transcriptional regulatory protein LnrK (Bacillus subtilis (strain 168)).